Consider the following 488-residue polypeptide: Protein nucleotidyltransferase YdiU (488 aa).

Residues Gly-91, Gly-93, Arg-94, Lys-114, Asp-126, Gly-127, Arg-177, and Arg-184 each contribute to the ATP site. A disordered region spans residues Arg-108 to Gly-127. Asp-253 (proton acceptor) is an active-site residue. Residues Asn-254 and Asp-263 each contribute to the Mg(2+) site. Asp-263 contacts ATP.

Belongs to the SELO family. It depends on Mg(2+) as a cofactor. Mn(2+) is required as a cofactor.

It carries out the reaction L-seryl-[protein] + ATP = 3-O-(5'-adenylyl)-L-seryl-[protein] + diphosphate. It catalyses the reaction L-threonyl-[protein] + ATP = 3-O-(5'-adenylyl)-L-threonyl-[protein] + diphosphate. The enzyme catalyses L-tyrosyl-[protein] + ATP = O-(5'-adenylyl)-L-tyrosyl-[protein] + diphosphate. The catalysed reaction is L-histidyl-[protein] + UTP = N(tele)-(5'-uridylyl)-L-histidyl-[protein] + diphosphate. It carries out the reaction L-seryl-[protein] + UTP = O-(5'-uridylyl)-L-seryl-[protein] + diphosphate. It catalyses the reaction L-tyrosyl-[protein] + UTP = O-(5'-uridylyl)-L-tyrosyl-[protein] + diphosphate. Functionally, nucleotidyltransferase involved in the post-translational modification of proteins. It can catalyze the addition of adenosine monophosphate (AMP) or uridine monophosphate (UMP) to a protein, resulting in modifications known as AMPylation and UMPylation. The sequence is that of Protein nucleotidyltransferase YdiU from Bacillus cereus (strain AH820).